An 81-amino-acid polypeptide reads, in one-letter code: Large ribosomal subunit protein bL27m (81 aa).

Positions 1-11 (MATKKSGGSSR) are enriched in polar residues. The segment at 1-20 (MATKKSGGSSRNGRDSKGRR) is disordered.

This sequence belongs to the bacterial ribosomal protein bL27 family.

It localises to the mitochondrion. This Reclinomonas americana protein is Large ribosomal subunit protein bL27m (RPL27).